Consider the following 265-residue polypeptide: Type 1 encapsulin shell protein (265 aa).

Belongs to the encapsulin family. Family 1 subfamily. Found in a complex with DyP, suggesting it is the native cargo protein. Monomers form pentamers, which assemble to form hollow shells composed of 60 subunits with several openings.

It is found in the encapsulin nanocompartment. The protein resides in the cell membrane. Its function is as follows. Shell component of a type 1 encapsulin nanocompartment. Assembles into proteinaceous shells 23-24 nm in diameter with 2-2.5 nm thick walls. Cargo protein DyP is targeted to the interior via its C-terminal extension; probably only 1 DyP hexamer is incorporated into each shell. Probably involved in protection against oxidative damage. The polypeptide is Type 1 encapsulin shell protein (Mycolicibacterium paratuberculosis (strain ATCC BAA-968 / K-10) (Mycobacterium paratuberculosis)).